A 346-amino-acid chain; its full sequence is NADH-quinone oxidoreductase subunit H (346 aa).

9 helical membrane-spanning segments follow: residues 13–33 (ILLI…ALAF), 51–71 (PNVV…KYIV), 83–103 (AVYF…WAVI), 116–136 (VAVL…IMGG), 162–182 (IGLI…TAIV), 191–211 (LLNW…ISAL), 244–264 (FMIG…LLFF), 278–298 (VFWM…VKAI), and 310–330 (LGWK…AFMA).

Belongs to the complex I subunit 1 family. NDH-1 is composed of 14 different subunits. Subunits NuoA, H, J, K, L, M, N constitute the membrane sector of the complex.

The protein resides in the cell inner membrane. It catalyses the reaction a quinone + NADH + 5 H(+)(in) = a quinol + NAD(+) + 4 H(+)(out). Functionally, NDH-1 shuttles electrons from NADH, via FMN and iron-sulfur (Fe-S) centers, to quinones in the respiratory chain. The immediate electron acceptor for the enzyme in this species is believed to be ubiquinone. Couples the redox reaction to proton translocation (for every two electrons transferred, four hydrogen ions are translocated across the cytoplasmic membrane), and thus conserves the redox energy in a proton gradient. This subunit may bind ubiquinone. The polypeptide is NADH-quinone oxidoreductase subunit H (Jannaschia sp. (strain CCS1)).